A 366-amino-acid chain; its full sequence is uncharacterized protein (366 aa).

6 helical membrane passes run Ile164–Ile184, Ile188–Leu208, Val223–Leu243, Phe256–Met276, Phe299–Leu319, and Phe325–Ile345.

This sequence to A.fulgidus AF2058.

Its subcellular location is the cell membrane. This is an uncharacterized protein from Methanocaldococcus jannaschii (strain ATCC 43067 / DSM 2661 / JAL-1 / JCM 10045 / NBRC 100440) (Methanococcus jannaschii).